The sequence spans 863 residues: MRLALLWALGLLGAGSPLPSWPLPNIGGTEEQQAESEKAPREPLEPQVLQDDLPISLKKVLQTSLPEPLRIKLELDGDSHILELLQNRELVPGRPTLVWYQPDGTRVVSEGHTLENCCYQGRVRGYAGSWVSICTCSGLRGLVVLTPERSYTLEQGPGDLQGPPIISRIQDLHLPGHTCALSWRESVHTQKPPEHPLGQRHIRRRRDVVTETKTVELVIVADHSEAQKYRDFQHLLNRTLEVALLLDTFFRPLNVRVALVGLEAWTQRDLVEISPNPAVTLENFLHWRRAHLLPRLPHDSAQLVTGTSFSGPTVGMAIQNSICSPDFSGGVNMDHSTSILGVASSIAHELGHSLGLDHDLPGNSCPCPGPAPAKTCIMEASTDFLPGLNFSNCSRRALEKALLDGMGSCLFERLPSLPPMAAFCGNMFVEPGEQCDCGFLDDCVDPCCDSLTCQLRPGAQCASDGPCCQNCQLRPSGWQCRPTRGDCDLPEFCPGDSSQCPPDVSLGDGEPCAGGQAVCMHGRCASYAQQCQSLWGPGAQPAAPLCLQTANTRGNAFGSCGRNPSGSYVSCTPRDAICGQLQCQTGRTQPLLGSIRDLLWETIDVNGTELNCSWVHLDLGSDVAQPLLTLPGTACGPGLVCIDHRCQRVDLLGAQECRSKCHGHGVCDSNRHCYCEEGWAPPDCTTQLKATSSLTTGLLLSLLVLLVLVMLGASYWYRARLHQRLCQLKGPTCQYRAAQSGPSERPGPPQRALLARGTKQASALSFPAPPSRPLPPDPVSKRLQAELADRPNPPTRPLPADPVVRSPKSQGPAKPPPPRKPLPADPQGRCPSGDLPGPGAGIPPLVVPSRPAPPPPTVSSLYL.

The first 17 residues, 1–17 (MRLALLWALGLLGAGSP), serve as a signal peptide directing secretion. Positions 18 to 206 (LPSWPLPNIG…LGQRHIRRRR (189 aa)) are excised as a propeptide. Positions 22 to 45 (PLPNIGGTEEQQAESEKAPREPLE) are disordered. A compositionally biased stretch (basic and acidic residues) spans 35–44 (ESEKAPREPL). The short motif at 177–184 (HTCALSWR) is the Cysteine switch element. Position 179 (cysteine 179) interacts with Zn(2+). Residues 207-696 (DVVTETKTVE…QLKATSSLTT (490 aa)) are Extracellular-facing. One can recognise a Peptidase M12B domain in the interval 213 to 414 (KTVELVIVAD…GMGSCLFERL (202 aa)). N-linked (GlcNAc...) asparagine glycosylation occurs at asparagine 237. 4 cysteine pairs are disulfide-bonded: cysteine 323–cysteine 409, cysteine 365–cysteine 393, cysteine 367–cysteine 376, and cysteine 480–cysteine 500. Residue histidine 348 participates in Zn(2+) binding. Residue glutamate 349 is part of the active site. Residues histidine 352 and histidine 358 each coordinate Zn(2+). Asparagine 389 and asparagine 392 each carry an N-linked (GlcNAc...) asparagine glycan. The Disintegrin domain maps to 421–508 (AAFCGNMFVE…QCPPDVSLGD (88 aa)). Positions 484 to 486 (RGD) match the Cell attachment site motif. Asparagine 606 and asparagine 611 each carry an N-linked (GlcNAc...) asparagine glycan. 3 cysteine pairs are disulfide-bonded: cysteine 657/cysteine 667, cysteine 661/cysteine 673, and cysteine 675/cysteine 684. The region spanning 657-685 (CRSKCHGHGVCDSNRHCYCEEGWAPPDCT) is the EGF-like domain. A helical membrane pass occupies residues 697–717 (GLLLSLLVLLVLVMLGASYWY). A phosphotyrosine; by HCK and LCK mark is found at tyrosine 715 and tyrosine 735. The Cytoplasmic portion of the chain corresponds to 718–863 (RARLHQRLCQ…PPPTVSSLYL (146 aa)). The segment at 736–863 (RAAQSGPSER…PPPTVSSLYL (128 aa)) is disordered. Over residues 767 to 778 (PAPPSRPLPPDP) the composition is skewed to pro residues. The span at 779-789 (VSKRLQAELAD) shows a compositional bias: basic and acidic residues. Pro residues-rich tracts occupy residues 791–800 (PNPPTRPLPA) and 813–824 (AKPPPPRKPLPA). 2 short sequence motifs (SH3-binding) span residues 815–821 (PPPPRKP) and 850–856 (RPAPPPP).

As to quaternary structure, interacts with ITAGV-ITGB3 (vitronectin receptor). Interacts with SH3GL2 and SNX9; this interaction occurs preferentially with ADAM15 precursor, rather than the processed form, suggesting it occurs in a secretory pathway compartment prior to the medial Golgi. Interacts with ITAG9-ITGB1. Interacts specifically with Src family protein-tyrosine kinases (PTKs). Interacts with SH3PXD2A. Interacts with ITAGV-ITGB1. Interacts with GRB2, HCK, ITSN1, ITSN2, LYN, MAPK1, MAPK3, NCF1, NCK1, nephrocystin, PTK6, SNX33, LCK and SRC. Zn(2+) serves as cofactor. Post-translationally, the precursor is cleaved by a furin endopeptidase. In terms of processing, phosphorylation increases association with PTKs. In terms of tissue distribution, expressed in colon and small intestine. Expressed in airway smooth muscle and glomerular mesangial cells (at protein level). Ubiquitously expressed. Overexpressed in atherosclerotic lesions. Constitutively expressed in cultured endothelium and smooth muscle. Expressed in chondrocytes. Expressed in airway smooth muscle and glomerular mesangial cells.

The protein resides in the endomembrane system. The protein localises to the cell junction. It is found in the adherens junction. It localises to the cell projection. Its subcellular location is the cilium. The protein resides in the flagellum. The protein localises to the cytoplasmic vesicle. It is found in the secretory vesicle. It localises to the acrosome. With respect to regulation, inhibited by hydroxamate-type metalloproteinase inhibitors such as marimastat. Inhibited by metalloproteinase inhibitor 2 (TIMP-2) and TIMP-3 at nanomolar concentrations. Not significantly inhibited by TIMP-1 at concentrations of up to 100 nM. Not activated by PMA or ionomycin. In terms of biological role, active metalloproteinase with gelatinolytic and collagenolytic activity. Plays a role in the wound healing process. Mediates both heterotypic intraepithelial cell/T-cell interactions and homotypic T-cell aggregation. Inhibits beta-1 integrin-mediated cell adhesion and migration of airway smooth muscle cells. Suppresses cell motility on or towards fibronectin possibly by driving alpha-v/beta-1 integrin (ITAGV-ITGB1) cell surface expression via ERK1/2 inactivation. Cleaves E-cadherin in response to growth factor deprivation. Plays a role in glomerular cell migration. Plays a role in pathological neovascularization. May play a role in cartilage remodeling. May be proteolytically processed, during sperm epididymal maturation and the acrosome reaction. May play a role in sperm-egg binding through its disintegrin domain. The sequence is that of Disintegrin and metalloproteinase domain-containing protein 15 (ADAM15) from Homo sapiens (Human).